Consider the following 504-residue polypeptide: Signal recognition particle subunit SRP54 (504 aa).

The segment at 1–295 (MVLADLGRKI…KTQPFISKLL (295 aa)) is NG domain. GTP-binding positions include 108–115 (GLQGSGKT), 190–194 (DTSGR), and 248–251 (TKLD). The segment at 296 to 504 (GMGDIEGLID…MKGMMGFNNM (209 aa)) is M-domain.

Belongs to the GTP-binding SRP family. SRP54 subfamily. Component of a signal recognition particle (SRP) complex that consists of a 7SL RNA molecule of 300 nucleotides and six protein subunits: SRP72, SRP68, SRP54, SRP19, SRP14 and SRP9. Interacts with RNPS1. Interacts with the SRP receptor subunit SRPRA.

Its subcellular location is the nucleus speckle. The protein localises to the cytoplasm. It is found in the endoplasmic reticulum. It catalyses the reaction GTP + H2O = GDP + phosphate + H(+). Its function is as follows. Component of the signal recognition particle (SRP) complex, a ribonucleoprotein complex that mediates the cotranslational targeting of secretory and membrane proteins to the endoplasmic reticulum (ER). As part of the SRP complex, associates with the SRP receptor (SR) component SRPRA to target secretory proteins to the endoplasmic reticulum membrane. Binds to the signal sequence of presecretory proteins when they emerge from the ribosomes. Displays basal GTPase activity, and stimulates reciprocal GTPase activation of the SR subunit SRPRA. Forms a guanosine 5'-triphosphate (GTP)-dependent complex with the SR subunit SRPRA. SR compaction and GTPase mediated rearrangement of SR drive SRP-mediated cotranslational protein translocation into the ER. Requires the presence of SRP9/SRP14 and/or SRP19 to stably interact with RNA. Plays a role in proliferation and differentiation of granulocytic cells, neutrophils migration capacity and exocrine pancreas development. The protein is Signal recognition particle subunit SRP54 of Homo sapiens (Human).